The sequence spans 69 residues: uncharacterized protein (69 aa).

The disordered stretch occupies residues 48–69 (EADDVKPRKGRKPKAVSDADKD).

This is an uncharacterized protein from Salmonella phage P22 (Bacteriophage P22).